Here is a 400-residue protein sequence, read N- to C-terminus: D(3) dopamine receptor (400 aa).

The Extracellular portion of the chain corresponds to 1–32; that stretch reads MAPLSQLSGHLNYTCGVENSTGASQARPHAYY. N-linked (GlcNAc...) asparagine glycans are attached at residues Asn12 and Asn19. The chain crosses the membrane as a helical span at residues 33-55; that stretch reads ALSYCALILAIVFGNGLVCMAVL. Over 56–65 the chain is Cytoplasmic; that stretch reads KERALQTTTN. Residues 66–88 traverse the membrane as a helical segment; sequence YLVVSLAVADLLVATLVMPWVVY. The Extracellular segment spans residues 89–104; the sequence is LEVTGGVWNFSRVCCD. N-linked (GlcNAc...) asparagine glycosylation is present at Asn97. Residues Cys103 and Cys181 are joined by a disulfide bond. A helical transmembrane segment spans residues 105 to 126; it reads VFVTLDVMMCTASILNLCAISI. Over 127-149 the chain is Cytoplasmic; sequence DRYTAVVMPVHYQHGTGQSSCRR. Residues 150 to 170 form a helical membrane-spanning segment; that stretch reads VTLMITAVWVLAFAVSCPLLF. Residues 171–187 are Extracellular-facing; that stretch reads GFNTTGDPTVCSISNPD. An N-linked (GlcNAc...) asparagine glycan is attached at Asn173. A helical membrane pass occupies residues 188–209; the sequence is FVIYSSVVSFYLPFGVTVLVYA. Residues 210 to 329 are Cytoplasmic-facing; that stretch reads RIYVVLKQRR…VPLREKKATQ (120 aa). The chain crosses the membrane as a helical span at residues 330–351; the sequence is MVAIVLGAFIVCWLPFFLTHVL. Residues 352 to 366 lie on the Extracellular side of the membrane; it reads NTHCQTCHVSPELYS. Cys355 and Cys358 are disulfide-bonded. A helical membrane pass occupies residues 367–386; it reads ATTWLGYVNSALNPVIYTTF. Over 387-400 the chain is Cytoplasmic; the sequence is NIEFRKAFLKILSC.

This sequence belongs to the G-protein coupled receptor 1 family. As to quaternary structure, interacts with CLIC6. Interacts with GRK4. Interacts with PALM. Interacts with FLNA (via filamin repeat 21); increases PKA-mediated phosphorylation of FLNA. Post-translationally, phosphorylated by GRK4. Palmitoylated.

Its subcellular location is the cell membrane. Dopamine receptor whose activity is mediated by G proteins which inhibit adenylyl cyclase. Promotes cell proliferation. This is D(3) dopamine receptor (DRD3) from Chlorocebus aethiops (Green monkey).